We begin with the raw amino-acid sequence, 161 residues long: Alpha-crystallin A chain (161 aa).

The residue at position 1 (M1) is an N-acetylmethionine. The tract at residues 1–53 (MDVTIQHPWFKRALGPFYHNRLFDQFFGEGLFEYDLLPFQSLFRTVLDSGISE) is required for complex formation with BFSP1 and BFSP2. Q6 and Q40 each carry deamidated glutamine; partial. The sHSP domain maps to 41–150 (SLFRTVLDSG…SHSERAIPVS (110 aa)). N6-acetyllysine is present on K87. H88 is a binding site for Zn(2+). At N89 the chain carries Deamidated asparagine; partial. E90 and H95 together coordinate Zn(2+). S110 carries the phosphoserine modification. A Deamidated asparagine; partial modification is found at N111. A disulfide bridge links C119 with C130. Residue Q135 is modified to Deamidated glutamine; partial. The tract at residues 135-161 (QSGMDASHSERAIPVSREEKASSAPNS) is disordered. The segment covering 141-155 (SHSERAIPVSREEKA) has biased composition (basic and acidic residues). H142 serves as a coordination point for Zn(2+). The O-linked (GlcNAc) serine glycan is linked to S150.

The protein belongs to the small heat shock protein (HSP20) family. In terms of assembly, heteromer composed of three CRYAA and one CRYAB subunits. Inter-subunit bridging via zinc ions enhances stability, which is crucial as there is no protein turn over in the lens. Can also form homodimers and homotetramers (dimers of dimers) which serve as the building blocks of homooligomers. Within homooligomers, the zinc-binding motif is created from residues of 3 different molecules. His-88 and Glu-90 from one molecule are ligands of the zinc ion, and His-95 and His-142 residues from additional molecules complete the site with tetrahedral coordination geometry. Part of a complex required for lens intermediate filament formation composed of BFSP1, BFSP2 and CRYAA. Undergoes age-dependent proteolytical cleavage at the C-terminus.

It is found in the cytoplasm. It localises to the nucleus. Functionally, contributes to the transparency and refractive index of the lens. In its oxidized form (absence of intramolecular disulfide bond), acts as a chaperone, preventing aggregation of various proteins under a wide range of stress conditions. Required for the correct formation of lens intermediate filaments as part of a complex composed of BFSP1, BFSP2 and CRYAA. In Trichechus inunguis (Amazon manatee), this protein is Alpha-crystallin A chain (CRYAA).